Consider the following 304-residue polypeptide: Nod factor export ATP-binding protein I (304 aa).

The 231-residue stretch at 6-236 (IDFQQVEKRY…EIGCDVIEIY (231 aa)) folds into the ABC transporter domain. ATP is bound at residue 38–45 (GPNGAGKT).

This sequence belongs to the ABC transporter superfamily. Lipooligosaccharide exporter (TC 3.A.1.102) family. The complex is composed of two ATP-binding proteins (NodI) and two transmembrane proteins (NodJ).

Its subcellular location is the cell inner membrane. Functionally, part of the ABC transporter complex NodIJ involved in the export of the nodulation factors (Nod factors), the bacterial signal molecules that induce symbiosis and subsequent nodulation induction. Nod factors are LCO (lipo-chitin oligosaccharide), a modified beta-1,4-linked N-acetylglucosamine oligosaccharide. This subunit is responsible for energy coupling to the transport system. This Burkholderia pseudomallei (strain 1710b) protein is Nod factor export ATP-binding protein I.